The sequence spans 491 residues: Peptidoglycan D,D-transpeptidase PbpA (491 aa).

Topologically, residues 1-8 are cytoplasmic; it reads MNTSLRRV. Residues 9–29 form a helical; Signal-anchor for type II membrane protein membrane-spanning segment; it reads AVAIMVLIVLLLANATVTQVF. The Periplasmic segment spans residues 30–491; the sequence is AADGLRADPR…TIAAALREGS (462 aa). The segment at 160-484 is transpeptidase; sequence GSVVALEPST…AAPIGRATIA (325 aa). Catalysis depends on serine 222, which acts as the Acyl-ester intermediate.

Belongs to the transpeptidase family.

The protein localises to the cell inner membrane. The catalysed reaction is Preferential cleavage: (Ac)2-L-Lys-D-Ala-|-D-Ala. Also transpeptidation of peptidyl-alanyl moieties that are N-acyl substituents of D-alanine.. It participates in cell wall biogenesis; peptidoglycan biosynthesis. Transpeptidase that catalyzes cross-linking of the peptidoglycan cell wall. Required for the regulation of cell length. The polypeptide is Peptidoglycan D,D-transpeptidase PbpA (pbpA) (Mycolicibacterium smegmatis (strain ATCC 700084 / mc(2)155) (Mycobacterium smegmatis)).